The chain runs to 82 residues: uncharacterized protein (82 aa).

2 helical membrane passes run 22-39 (WASDVVIQFITIVVMFIA) and 46-65 (LKMGGIIFVCCIGSAVTWVI).

It is found in the cell membrane. This is an uncharacterized protein from Bacillus subtilis (strain 168).